A 308-amino-acid chain; its full sequence is tRNA dimethylallyltransferase (308 aa).

10 to 17 (GPTASGKT) contacts ATP. 12 to 17 (TASGKT) is a binding site for substrate. 2 interaction with substrate tRNA regions span residues 35–38 (DSSL) and 159–163 (QRIFR).

Belongs to the IPP transferase family. In terms of assembly, monomer. Mg(2+) is required as a cofactor.

It carries out the reaction adenosine(37) in tRNA + dimethylallyl diphosphate = N(6)-dimethylallyladenosine(37) in tRNA + diphosphate. Functionally, catalyzes the transfer of a dimethylallyl group onto the adenine at position 37 in tRNAs that read codons beginning with uridine, leading to the formation of N6-(dimethylallyl)adenosine (i(6)A). The chain is tRNA dimethylallyltransferase from Francisella tularensis subsp. tularensis (strain FSC 198).